Reading from the N-terminus, the 270-residue chain is Phosphatidylglycerol--prolipoprotein diacylglyceryl transferase (270 aa).

7 consecutive transmembrane segments (helical) span residues 14–34 (VAFTLFGFSVHWYGIMYILAL), 60–80 (YFFWVEIGVILGARLGYIAIY), 103–123 (FVGIRGMSYHGAVVGFLLATI), 133–153 (LWQLLDLCALCIPFGYIFGRI), 181–201 (PSQLYEAALEGLAVFLILFFY), 209–229 (GELIALYAVLYTLARFVCEFF), and 235–255 (GIGFIIFGLSMGQILSILMFF). R152 provides a ligand contact to a 1,2-diacyl-sn-glycero-3-phospho-(1'-sn-glycerol).

It belongs to the Lgt family.

The protein localises to the cell inner membrane. The catalysed reaction is L-cysteinyl-[prolipoprotein] + a 1,2-diacyl-sn-glycero-3-phospho-(1'-sn-glycerol) = an S-1,2-diacyl-sn-glyceryl-L-cysteinyl-[prolipoprotein] + sn-glycerol 1-phosphate + H(+). It functions in the pathway protein modification; lipoprotein biosynthesis (diacylglyceryl transfer). In terms of biological role, catalyzes the transfer of the diacylglyceryl group from phosphatidylglycerol to the sulfhydryl group of the N-terminal cysteine of a prolipoprotein, the first step in the formation of mature lipoproteins. The chain is Phosphatidylglycerol--prolipoprotein diacylglyceryl transferase from Campylobacter curvus (strain 525.92).